We begin with the raw amino-acid sequence, 190 residues long: Threonylcarbamoyl-AMP synthase (190 aa).

Positions 7–190 constitute a YrdC-like domain; that stretch reads RDAIAAAIDV…ALTGELFRQG (184 aa).

The protein belongs to the SUA5 family. TsaC subfamily.

It is found in the cytoplasm. It catalyses the reaction L-threonine + hydrogencarbonate + ATP = L-threonylcarbamoyladenylate + diphosphate + H2O. Its function is as follows. Required for the formation of a threonylcarbamoyl group on adenosine at position 37 (t(6)A37) in tRNAs that read codons beginning with adenine. Catalyzes the conversion of L-threonine, HCO(3)(-)/CO(2) and ATP to give threonylcarbamoyl-AMP (TC-AMP) as the acyladenylate intermediate, with the release of diphosphate. The sequence is that of Threonylcarbamoyl-AMP synthase from Escherichia coli O9:H4 (strain HS).